The following is a 190-amino-acid chain: Peptidyl-tRNA hydrolase (190 aa).

Tyr19 contributes to the tRNA binding site. His24 acts as the Proton acceptor in catalysis. TRNA is bound by residues Tyr72, Asn74, and Asn121.

It belongs to the PTH family.

It is found in the mitochondrion. The catalysed reaction is an N-acyl-L-alpha-aminoacyl-tRNA + H2O = an N-acyl-L-amino acid + a tRNA + H(+). Functionally, peptidyl-tRNA hydrolase involved in the recycling of tRNA-Lys from diacetyl-lysyl-tRNA-Lys and is important for mitochondrial function. In Saccharomyces cerevisiae (strain ATCC 204508 / S288c) (Baker's yeast), this protein is Peptidyl-tRNA hydrolase (PTH1).